A 122-amino-acid polypeptide reads, in one-letter code: Protein preY, mitochondrial (122 aa).

The transit peptide at 1–40 (MLAVRAWGRTYNTLVQRKLNAACPTGALPAVTLRPLHCSL) directs the protein to the mitochondrion. One can recognise a TRM112 domain in the interval 56–102 (DPTLLQFLVCPLSRKSLRYEESTNELINDELGIAYPIVDGIPNMIPQ).

Belongs to the PREY family.

Its subcellular location is the mitochondrion. In terms of biological role, in mitochondria, S-adenosylmethionine-dependent methyltransferase chaperone that supports both coenzyme Q biosynthesis and NADH:ubiquinone oxidoreductase complex (complex I, MT-ND1) assembly. The protein is Protein preY, mitochondrial (pyurf) of Xenopus tropicalis (Western clawed frog).